A 930-amino-acid chain; its full sequence is Translation initiation factor IF-2 (930 aa).

Disordered regions lie at residues 160–179 (EPVE…FTDG) and 208–301 (AKRA…AAAP). Residues 208–227 (AKRAAEEAKRTQPRAEKPAD) are compositionally biased toward basic and acidic residues. Basic residues-rich tracts occupy residues 263–272 (GHGHKKHHHG) and 288–301 (KRGA…AAAP). A tr-type G domain is found at 431 to 600 (TRAPVVTVMG…SLQAEVLELT (170 aa)). Residues 440–447 (GHVDHGKT) form a G1 region. Position 440-447 (440-447 (GHVDHGKT)) interacts with GTP. The interval 465 to 469 (GITQH) is G2. The interval 486 to 489 (DTPG) is G3. GTP is bound by residues 486-490 (DTPGH) and 540-543 (NKCD). The segment at 540 to 543 (NKCD) is G4. The G5 stretch occupies residues 576–578 (SAH).

Belongs to the TRAFAC class translation factor GTPase superfamily. Classic translation factor GTPase family. IF-2 subfamily.

The protein resides in the cytoplasm. Functionally, one of the essential components for the initiation of protein synthesis. Protects formylmethionyl-tRNA from spontaneous hydrolysis and promotes its binding to the 30S ribosomal subunits. Also involved in the hydrolysis of GTP during the formation of the 70S ribosomal complex. The chain is Translation initiation factor IF-2 from Cellvibrio japonicus (strain Ueda107) (Pseudomonas fluorescens subsp. cellulosa).